Reading from the N-terminus, the 118-residue chain is Holo-[acyl-carrier-protein] synthase (118 aa).

Mg(2+) contacts are provided by D9 and E52.

It belongs to the P-Pant transferase superfamily. AcpS family. Requires Mg(2+) as cofactor.

Its subcellular location is the cytoplasm. The enzyme catalyses apo-[ACP] + CoA = holo-[ACP] + adenosine 3',5'-bisphosphate + H(+). Its function is as follows. Transfers the 4'-phosphopantetheine moiety from coenzyme A to a Ser of acyl-carrier-protein. This Frankia casuarinae (strain DSM 45818 / CECT 9043 / HFP020203 / CcI3) protein is Holo-[acyl-carrier-protein] synthase.